A 161-amino-acid chain; its full sequence is Ribosome maturation factor RimP (161 aa).

The protein belongs to the RimP family.

It is found in the cytoplasm. Required for maturation of 30S ribosomal subunits. This chain is Ribosome maturation factor RimP, found in Herminiimonas arsenicoxydans.